The following is a 546-amino-acid chain: CTP synthase (546 aa).

The amidoligase domain stretch occupies residues 1-266; the sequence is MTTRYIFVTG…DDLVVKRFGL (266 aa). S14 contacts CTP. Residue S14 coordinates UTP. Residues 15-20 and D72 contribute to the ATP site; that span reads SLGKGI. Mg(2+) contacts are provided by D72 and E140. CTP is bound by residues 147–149, 187–192, and K223; these read DIE and KTKPTQ. UTP is bound by residues 187 to 192 and K223; that span reads KTKPTQ. 239–241 is a binding site for ATP; it reads KDV. The Glutamine amidotransferase type-1 domain occupies 291–542; sequence VIGMVGKYIE…VAAASAHQKR (252 aa). G352 is an L-glutamine binding site. The active-site Nucleophile; for glutamine hydrolysis is the C379. L-glutamine contacts are provided by residues 380–383, E403, and R470; that span reads LGMQ. Residues H515 and E517 contribute to the active site.

Belongs to the CTP synthase family. Homotetramer.

It carries out the reaction UTP + L-glutamine + ATP + H2O = CTP + L-glutamate + ADP + phosphate + 2 H(+). The catalysed reaction is L-glutamine + H2O = L-glutamate + NH4(+). The enzyme catalyses UTP + NH4(+) + ATP = CTP + ADP + phosphate + 2 H(+). It participates in pyrimidine metabolism; CTP biosynthesis via de novo pathway; CTP from UDP: step 2/2. Allosterically activated by GTP, when glutamine is the substrate; GTP has no effect on the reaction when ammonia is the substrate. The allosteric effector GTP functions by stabilizing the protein conformation that binds the tetrahedral intermediate(s) formed during glutamine hydrolysis. Inhibited by the product CTP, via allosteric rather than competitive inhibition. In terms of biological role, catalyzes the ATP-dependent amination of UTP to CTP with either L-glutamine or ammonia as the source of nitrogen. Regulates intracellular CTP levels through interactions with the four ribonucleotide triphosphates. This is CTP synthase from Shewanella sp. (strain MR-4).